A 344-amino-acid chain; its full sequence is MSVGNIQSPSNLPGLQNLNLNTNTNSQQSGQSVQDLIKQVEKDILNIIAALVQKAAQSAGGNTGNTGNAPAKDGNANAGANDPSKNDPSKSQGPQSANKTGNVDDANNQDPMQALMQLLEDLVKLLKAALHMQQPGGNDKGNGVGGANGAKGAGGQGGLAEALQEIEQILAQLGGGGAGAGGAGGGVGGAGGADGGSGAGGAGGANGADGGNGVNGNQANGPQNAGDVNGANGADDGSEDQGGLTGVLQKLMKILNALVQMMQQGGLGGGNQAQGGSKGAGNASPASGANPGANQPGSADDQSSGQNNLQSQIMDVVKEVVQILQQMLAAQNGGSQQSTSTQPM.

Disordered stretches follow at residues 1 to 28 (MSVG…NSQQ), 58 to 108 (SAGG…DANN), 134 to 156 (QPGG…AGGQ), 211 to 242 (GNGV…EDQG), and 268 to 311 (GGGN…NLQS). 2 stretches are compositionally biased toward low complexity: residues 8–28 (SPSN…NSQQ) and 65–83 (NTGN…ANDP). Over residues 89-108 (SKSQGPQSANKTGNVDDANN) the composition is skewed to polar residues. Gly residues predominate over residues 138–156 (NDKGNGVGGANGAKGAGGQ). Residues 215–235 (NGNQANGPQNAGDVNGANGAD) show a composition bias toward low complexity. Residues 268–279 (GGGNQAQGGSKG) show a composition bias toward gly residues. Positions 280 to 294 (AGNASPASGANPGAN) are enriched in low complexity. Residues 295–311 (QPGSADDQSSGQNNLQS) show a composition bias toward polar residues.

Post-translationally, popA2 and PopA3 are produced from PopA1.

The protein resides in the secreted. Its function is as follows. Acts as a specific hypersensitive response (HR) elicitor. Has activity on tobacco (non-host plant) and petunia but is without activity on tomato (host plant); PopA3 seems to be more active than a PopA1-PopA2 mixture. The chain is Protein PopA1 (popA) from Ralstonia nicotianae (strain ATCC BAA-1114 / GMI1000) (Ralstonia solanacearum).